We begin with the raw amino-acid sequence, 275 residues long: Lacto-N-neotetraose biosynthesis glycosyltransferase LgtB (275 aa).

Belongs to the glycosyltransferase 25 family.

It functions in the pathway glycan metabolism; lacto-N-neotetraose biosynthesis. It participates in bacterial outer membrane biogenesis; lipooligosaccharide biosynthesis. In terms of biological role, adds the second galactose to the lacto-N-tetraose chain in lipooligosaccharide (LOS). The protein is Lacto-N-neotetraose biosynthesis glycosyltransferase LgtB (lgtB) of Neisseria meningitidis serogroup B (strain ATCC BAA-335 / MC58).